A 257-amino-acid chain; its full sequence is Putative transcription factor R430 (257 aa).

Disordered regions lie at residues 1–35 (MEKF…DNNS) and 58–77 (SLKS…PNKS). Low complexity predominate over residues 7-25 (TDNTTDNTTDNTTDNTTDN). Residues 26–35 (TTDKLTDNNS) are compositionally biased toward basic and acidic residues.

Belongs to the nucleo-cytoplasmic large DNA viruses (NCLDVs) VLTF-3 family.

Putative transcription factor. The polypeptide is Putative transcription factor R430 (Acanthamoeba polyphaga (Amoeba)).